The chain runs to 416 residues: Gamma-glutamyl phosphate reductase (416 aa).

The protein belongs to the gamma-glutamyl phosphate reductase family.

Its subcellular location is the cytoplasm. It carries out the reaction L-glutamate 5-semialdehyde + phosphate + NADP(+) = L-glutamyl 5-phosphate + NADPH + H(+). The protein operates within amino-acid biosynthesis; L-proline biosynthesis; L-glutamate 5-semialdehyde from L-glutamate: step 2/2. In terms of biological role, catalyzes the NADPH-dependent reduction of L-glutamate 5-phosphate into L-glutamate 5-semialdehyde and phosphate. The product spontaneously undergoes cyclization to form 1-pyrroline-5-carboxylate. The chain is Gamma-glutamyl phosphate reductase from Streptococcus pyogenes serotype M49 (strain NZ131).